The sequence spans 156 residues: 3-hydroxyacyl-[acyl-carrier-protein] dehydratase FabZ (156 aa).

The active site involves histidine 54.

It belongs to the thioester dehydratase family. FabZ subfamily.

The protein resides in the cytoplasm. The enzyme catalyses a (3R)-hydroxyacyl-[ACP] = a (2E)-enoyl-[ACP] + H2O. Its function is as follows. Involved in unsaturated fatty acids biosynthesis. Catalyzes the dehydration of short chain beta-hydroxyacyl-ACPs and long chain saturated and unsaturated beta-hydroxyacyl-ACPs. The chain is 3-hydroxyacyl-[acyl-carrier-protein] dehydratase FabZ from Koribacter versatilis (strain Ellin345).